The sequence spans 333 residues: 4-hydroxy-3-methylbut-2-enyl diphosphate reductase (333 aa).

Residue Cys20 participates in [4Fe-4S] cluster binding. His49 and His85 together coordinate (2E)-4-hydroxy-3-methylbut-2-enyl diphosphate. Dimethylallyl diphosphate-binding residues include His49 and His85. Residues His49 and His85 each contribute to the isopentenyl diphosphate site. Cys107 is a [4Fe-4S] cluster binding site. His135 provides a ligand contact to (2E)-4-hydroxy-3-methylbut-2-enyl diphosphate. Residue His135 coordinates dimethylallyl diphosphate. His135 provides a ligand contact to isopentenyl diphosphate. Glu137 serves as the catalytic Proton donor. Thr176 contributes to the (2E)-4-hydroxy-3-methylbut-2-enyl diphosphate binding site. Residue Cys206 coordinates [4Fe-4S] cluster. Ser234, Ser235, Asn236, and Ser279 together coordinate (2E)-4-hydroxy-3-methylbut-2-enyl diphosphate. Dimethylallyl diphosphate-binding residues include Ser234, Ser235, Asn236, and Ser279. Residues Ser234, Ser235, Asn236, and Ser279 each contribute to the isopentenyl diphosphate site.

This sequence belongs to the IspH family. [4Fe-4S] cluster is required as a cofactor.

It catalyses the reaction isopentenyl diphosphate + 2 oxidized [2Fe-2S]-[ferredoxin] + H2O = (2E)-4-hydroxy-3-methylbut-2-enyl diphosphate + 2 reduced [2Fe-2S]-[ferredoxin] + 2 H(+). The catalysed reaction is dimethylallyl diphosphate + 2 oxidized [2Fe-2S]-[ferredoxin] + H2O = (2E)-4-hydroxy-3-methylbut-2-enyl diphosphate + 2 reduced [2Fe-2S]-[ferredoxin] + 2 H(+). It participates in isoprenoid biosynthesis; dimethylallyl diphosphate biosynthesis; dimethylallyl diphosphate from (2E)-4-hydroxy-3-methylbutenyl diphosphate: step 1/1. It functions in the pathway isoprenoid biosynthesis; isopentenyl diphosphate biosynthesis via DXP pathway; isopentenyl diphosphate from 1-deoxy-D-xylulose 5-phosphate: step 6/6. Functionally, catalyzes the conversion of 1-hydroxy-2-methyl-2-(E)-butenyl 4-diphosphate (HMBPP) into a mixture of isopentenyl diphosphate (IPP) and dimethylallyl diphosphate (DMAPP). Acts in the terminal step of the DOXP/MEP pathway for isoprenoid precursor biosynthesis. The chain is 4-hydroxy-3-methylbut-2-enyl diphosphate reductase from Rhizobium leguminosarum bv. trifolii (strain WSM2304).